We begin with the raw amino-acid sequence, 271 residues long: ATP synthase subunit a (271 aa).

5 consecutive transmembrane segments (helical) span residues 38-58 (FWTL…LFLL), 100-120 (LIAP…LMDL), 146-166 (DVNI…FYSI), 220-240 (LIFI…LNVP), and 242-262 (AIFH…LTIV).

It belongs to the ATPase A chain family. F-type ATPases have 2 components, CF(1) - the catalytic core - and CF(0) - the membrane proton channel. CF(1) has five subunits: alpha(3), beta(3), gamma(1), delta(1), epsilon(1). CF(0) has three main subunits: a(1), b(2) and c(9-12). The alpha and beta chains form an alternating ring which encloses part of the gamma chain. CF(1) is attached to CF(0) by a central stalk formed by the gamma and epsilon chains, while a peripheral stalk is formed by the delta and b chains.

The protein resides in the cell inner membrane. Functionally, key component of the proton channel; it plays a direct role in the translocation of protons across the membrane. The sequence is that of ATP synthase subunit a from Citrobacter koseri (strain ATCC BAA-895 / CDC 4225-83 / SGSC4696).